We begin with the raw amino-acid sequence, 223 residues long: Fibronectin type III domain-containing protein 10 (223 aa).

Positions 1 to 19 (MRAPPLLLLLAACAPPSGA) are cleaved as a signal peptide. Over 20–179 (AVDPTPPGWE…FTAEPAAMQE (160 aa)) the chain is Extracellular. A Fibronectin type-III domain is found at 72-168 (LASAGGSLRA…VVPPELAECV (97 aa)). N-linked (GlcNAc...) asparagine glycans are attached at residues Asn86 and Asn109. A helical membrane pass occupies residues 180 to 200 (IVVAMTAVGGSICVMLVVICL). The Cytoplasmic portion of the chain corresponds to 201-223 (LVAYITENLMHPTFRRPSLRRQP).

The protein localises to the membrane. This is Fibronectin type III domain-containing protein 10 (Fndc10) from Mus musculus (Mouse).